The primary structure comprises 474 residues: Protein U79/U80 (474 aa).

Basic and acidic residues-rich tracts occupy residues 156 to 165 (DRKKHDDEHR) and 175 to 219 (RKVE…KRQK). Disordered stretches follow at residues 156–219 (DRKK…KRQK) and 412–441 (SGQN…SRTQ). Residues 417 to 432 (GRARGRGRGRAPRRRN) are compositionally biased toward basic residues.

It belongs to the herpesviridae U79/UL112 family.

The protein localises to the host nucleus. Functionally, may be involved in DNA replication. This chain is Protein U79/U80 (U79/U80), found in Homo sapiens (Human).